The chain runs to 287 residues: Phosphatidylserine decarboxylase proenzyme (287 aa).

Residues D90, H147, and S252 each act as charge relay system; for autoendoproteolytic cleavage activity in the active site. S252 serves as the catalytic Schiff-base intermediate with substrate; via pyruvic acid; for decarboxylase activity. Position 252 is a pyruvic acid (Ser); by autocatalysis (S252).

This sequence belongs to the phosphatidylserine decarboxylase family. PSD-B subfamily. Prokaryotic type I sub-subfamily. Heterodimer of a large membrane-associated beta subunit and a small pyruvoyl-containing alpha subunit. It depends on pyruvate as a cofactor. In terms of processing, is synthesized initially as an inactive proenzyme. Formation of the active enzyme involves a self-maturation process in which the active site pyruvoyl group is generated from an internal serine residue via an autocatalytic post-translational modification. Two non-identical subunits are generated from the proenzyme in this reaction, and the pyruvate is formed at the N-terminus of the alpha chain, which is derived from the carboxyl end of the proenzyme. The autoendoproteolytic cleavage occurs by a canonical serine protease mechanism, in which the side chain hydroxyl group of the serine supplies its oxygen atom to form the C-terminus of the beta chain, while the remainder of the serine residue undergoes an oxidative deamination to produce ammonia and the pyruvoyl prosthetic group on the alpha chain. During this reaction, the Ser that is part of the protease active site of the proenzyme becomes the pyruvoyl prosthetic group, which constitutes an essential element of the active site of the mature decarboxylase.

The protein resides in the cell membrane. It carries out the reaction a 1,2-diacyl-sn-glycero-3-phospho-L-serine + H(+) = a 1,2-diacyl-sn-glycero-3-phosphoethanolamine + CO2. It functions in the pathway phospholipid metabolism; phosphatidylethanolamine biosynthesis; phosphatidylethanolamine from CDP-diacylglycerol: step 2/2. Functionally, catalyzes the formation of phosphatidylethanolamine (PtdEtn) from phosphatidylserine (PtdSer). In Pseudomonas putida (strain GB-1), this protein is Phosphatidylserine decarboxylase proenzyme.